The following is a 144-amino-acid chain: Large ribosomal subunit protein uL15 (144 aa).

Residues 1-54 (MKLNTIKPAEGAKHARRRVGRGIGSGLGKTGGRGHKGQKSRAGGFHKVGFEGGQ) are disordered. Positions 21-31 (RGIGSGLGKTG) are enriched in gly residues.

This sequence belongs to the universal ribosomal protein uL15 family. In terms of assembly, part of the 50S ribosomal subunit.

In terms of biological role, binds to the 23S rRNA. The polypeptide is Large ribosomal subunit protein uL15 (Methylobacillus flagellatus (strain ATCC 51484 / DSM 6875 / VKM B-1610 / KT)).